A 61-amino-acid chain; its full sequence is Photosystem II reaction center protein K (61 aa).

Residues M1–G24 constitute a propeptide that is removed on maturation. The helical transmembrane segment at I36–A56 threads the bilayer.

It belongs to the PsbK family. In terms of assembly, PSII is composed of 1 copy each of membrane proteins PsbA, PsbB, PsbC, PsbD, PsbE, PsbF, PsbH, PsbI, PsbJ, PsbK, PsbL, PsbM, PsbT, PsbX, PsbY, PsbZ, Psb30/Ycf12, at least 3 peripheral proteins of the oxygen-evolving complex and a large number of cofactors. It forms dimeric complexes.

The protein localises to the plastid. Its subcellular location is the chloroplast thylakoid membrane. In terms of biological role, one of the components of the core complex of photosystem II (PSII). PSII is a light-driven water:plastoquinone oxidoreductase that uses light energy to abstract electrons from H(2)O, generating O(2) and a proton gradient subsequently used for ATP formation. It consists of a core antenna complex that captures photons, and an electron transfer chain that converts photonic excitation into a charge separation. The polypeptide is Photosystem II reaction center protein K (Coffea arabica (Arabian coffee)).